The primary structure comprises 128 residues: Glycine cleavage system H protein (128 aa).

The region spanning 22 to 104 (TALVGVTDYA…YASGWLVKIK (83 aa)) is the Lipoyl-binding domain. N6-lipoyllysine is present on Lys-63.

It belongs to the GcvH family. In terms of assembly, the glycine cleavage system is composed of four proteins: P, T, L and H. (R)-lipoate is required as a cofactor.

Its function is as follows. The glycine cleavage system catalyzes the degradation of glycine. The H protein shuttles the methylamine group of glycine from the P protein to the T protein. This Halothermothrix orenii (strain H 168 / OCM 544 / DSM 9562) protein is Glycine cleavage system H protein.